Reading from the N-terminus, the 370-residue chain is ADP-ribosylhydrolase ARH3 (370 aa).

Mg(2+) is bound at residue Glu47. Thr70 bears the Phosphothreonine mark. 3 residues coordinate Mg(2+): Thr82, Asp83, and Asp84. Asp83 provides a ligand contact to substrate. Residues Lys152 to Gly158, His188, Leu241, and Ile277 each bind substrate. Positions 320, 322, and 323 each coordinate Mg(2+).

The protein belongs to the ADP-ribosylglycohydrolase family. Monomer. Requires Mg(2+) as cofactor. Ubiquitous.

Its subcellular location is the nucleus. The protein localises to the cytoplasm. It is found in the chromosome. The protein resides in the mitochondrion matrix. It catalyses the reaction [(1''-&gt;2')-ADP-alpha-D-ribose](n) + H2O = [(1''-&gt;2')-ADP-alpha-D-ribose](n-1) + ADP-D-ribose. The catalysed reaction is 1''-O-acetyl-ADP-alpha-D-ribose + H2O = ADP-D-ribose + acetate + H(+). It carries out the reaction O-(ADP-D-ribosyl)-L-seryl-[protein] + H2O = ADP-D-ribose + L-seryl-[protein]. The enzyme catalyses alpha-NAD(+) + H2O = ADP-D-ribose + nicotinamide + H(+). The protein undergoes a dramatic conformational switch from closed to open states upon substrate-binding, which enables specific substrate recognition for the 1''-O-linkage. The glutamate flap (Glu-47) blocks substrate entrance to Mg(2+) in the unliganded closed state. In presence of substrate, Glu-47 is ejected from the active site: this closed-to-open transition significantly widens the substrate-binding channel and precisely positions the scissile 1''-O-linkage for cleavage while securing tightly 2'- and 3'-hydroxyls of ADP-ribose. Its function is as follows. ADP-ribosylhydrolase that preferentially hydrolyzes the scissile alpha-O-linkage attached to the anomeric C1'' position of ADP-ribose and acts on different substrates, such as proteins ADP-ribosylated on serine and threonine, free poly(ADP-ribose) and O-acetyl-ADP-D-ribose. Specifically acts as a serine mono-ADP-ribosylhydrolase by mediating the removal of mono-ADP-ribose attached to serine residues on proteins, thereby playing a key role in DNA damage response. Serine ADP-ribosylation of proteins constitutes the primary form of ADP-ribosylation of proteins in response to DNA damage. Does not hydrolyze ADP-ribosyl-arginine, -cysteine, -diphthamide, or -asparagine bonds. Also able to degrade protein free poly(ADP-ribose), which is synthesized in response to DNA damage: free poly(ADP-ribose) acts as a potent cell death signal and its degradation by ADPRHL2 protects cells from poly(ADP-ribose)-dependent cell death, a process named parthanatos. Also hydrolyzes free poly(ADP-ribose) in mitochondria. Specifically digests O-acetyl-ADP-D-ribose, a product of deacetylation reactions catalyzed by sirtuins. Specifically degrades 1''-O-acetyl-ADP-D-ribose isomer, rather than 2''-O-acetyl-ADP-D-ribose or 3''-O-acetyl-ADP-D-ribose isomers. This is ADP-ribosylhydrolase ARH3 (Adprs) from Mus musculus (Mouse).